The following is a 223-amino-acid chain: Protein-L-isoaspartate O-methyltransferase (223 aa).

Serine 70 is a catalytic residue.

The protein belongs to the methyltransferase superfamily. L-isoaspartyl/D-aspartyl protein methyltransferase family.

The protein resides in the cytoplasm. It catalyses the reaction [protein]-L-isoaspartate + S-adenosyl-L-methionine = [protein]-L-isoaspartate alpha-methyl ester + S-adenosyl-L-homocysteine. Catalyzes the methyl esterification of L-isoaspartyl residues in peptides and proteins that result from spontaneous decomposition of normal L-aspartyl and L-asparaginyl residues. It plays a role in the repair and/or degradation of damaged proteins. This is Protein-L-isoaspartate O-methyltransferase from Methylobacillus flagellatus (strain ATCC 51484 / DSM 6875 / VKM B-1610 / KT).